Consider the following 310-residue polypeptide: Coproporphyrin III ferrochelatase (310 aa).

Fe-coproporphyrin III contacts are provided by residues tyrosine 13, arginine 30, 46–47, serine 54, and tyrosine 125; that span reads RY. Residues histidine 183 and glutamate 264 each coordinate Fe(2+).

Belongs to the ferrochelatase family.

The protein localises to the cytoplasm. It carries out the reaction Fe-coproporphyrin III + 2 H(+) = coproporphyrin III + Fe(2+). It functions in the pathway porphyrin-containing compound metabolism; protoheme biosynthesis. Functionally, involved in coproporphyrin-dependent heme b biosynthesis. Catalyzes the insertion of ferrous iron into coproporphyrin III to form Fe-coproporphyrin III. The sequence is that of Coproporphyrin III ferrochelatase from Geobacillus sp. (strain WCH70).